The sequence spans 131 residues: Lactose permease (131 aa).

At 1-13 the chain is on the cytoplasmic side; it reads MKFSELAPRERHN. The helical transmembrane segment at 14 to 34 threads the bilayer; it reads FVYFLLFFFFYHFIMSAYFPF. The Periplasmic portion of the chain corresponds to 35–50; that stretch reads FPVWLADVNHLTKTET. Residues 51 to 71 traverse the membrane as a helical segment; it reads GIVFSSISLFAIIFQPVFGLM. Residues 72–80 are Cytoplasmic-facing; the sequence is SDKLGLRKH. A helical transmembrane segment spans residues 81 to 101; the sequence is LLWTITVLLILFAPFFIFVFS. Position 102 (Pro102) is a topological domain, periplasmic. A helical membrane pass occupies residues 103–123; sequence LLQMNIIAGSLVGGIYLGIVF. Over 124–131 the chain is Cytoplasmic; sequence STAPGVGS.

It belongs to the major facilitator superfamily. Oligosaccharide:H(+) symporter (OHS) (TC 2.A.1.5) family.

Its subcellular location is the cell inner membrane. The catalysed reaction is lactose(in) + H(+)(in) = lactose(out) + H(+)(out). Responsible for transport of beta-galactosides into the cell, with the concomitant import of a proton (symport system). This is Lactose permease (lacY) from Klebsiella pneumoniae.